The primary structure comprises 201 residues: Superoxide dismutase [Mn] (201 aa).

The Mn(2+) site is built by His27, His81, Asp163, and His167.

Belongs to the iron/manganese superoxide dismutase family. As to quaternary structure, homodimer. It depends on Mn(2+) as a cofactor.

Its subcellular location is the secreted. It carries out the reaction 2 superoxide + 2 H(+) = H2O2 + O2. Its function is as follows. Destroys superoxide anion radicals which are normally produced within the cells and which are toxic to biological systems. The protein is Superoxide dismutase [Mn] (sodA) of Streptococcus pyogenes.